We begin with the raw amino-acid sequence, 361 residues long: Peptide chain release factor 1 (361 aa).

Q235 bears the N5-methylglutamine mark. Residues 287-309 (QKEASAMRSAQVGSGDRSERIRT) are disordered.

The protein belongs to the prokaryotic/mitochondrial release factor family. Post-translationally, methylated by PrmC. Methylation increases the termination efficiency of RF1.

Its subcellular location is the cytoplasm. Functionally, peptide chain release factor 1 directs the termination of translation in response to the peptide chain termination codons UAG and UAA. In Chlamydia caviae (strain ATCC VR-813 / DSM 19441 / 03DC25 / GPIC) (Chlamydophila caviae), this protein is Peptide chain release factor 1.